Here is a 438-residue protein sequence, read N- to C-terminus: Adenosylhomocysteinase (438 aa).

Residues Thr-64, Asp-139, and Glu-164 each coordinate substrate. 165-167 is a binding site for NAD(+); that stretch reads TTT. Residues Lys-194 and Asp-198 each coordinate substrate. Residues Asn-199, 228–233, Glu-251, Asn-286, 307–309, and Asn-352 each bind NAD(+); these read GYGDVG and IGH.

This sequence belongs to the adenosylhomocysteinase family. Requires NAD(+) as cofactor.

The protein resides in the cytoplasm. It carries out the reaction S-adenosyl-L-homocysteine + H2O = L-homocysteine + adenosine. Its pathway is amino-acid biosynthesis; L-homocysteine biosynthesis; L-homocysteine from S-adenosyl-L-homocysteine: step 1/1. In terms of biological role, may play a key role in the regulation of the intracellular concentration of adenosylhomocysteine. The polypeptide is Adenosylhomocysteinase (Coxiella burnetii (strain CbuK_Q154) (Coxiella burnetii (strain Q154))).